We begin with the raw amino-acid sequence, 548 residues long: MAAKDVKFGNDARVKMLRGVNVLADAVKVTLGPKGRNVVLDKSFGAPTITKDGVSVAREIELEDKFENMGAQMVKEVASKANDAAGDGTTTATVLAQSIITEGLKAVAAGMNPMDLKRGIDKAVAAAVEELKALSVPCSDSKAIAQVGTISANSDETVGKLIAEAMDKVGKEGVITVEDGTGLQDELDVVEGMQFDRGYLSPYFINKPETGAVELESPFILLADKKISNIREMLPVLEAVAKAGKPLLIIAEDVEGEALATLVVNTMRGIVKVAAVKAPGFGDRRKAMLQDIATLTGGTVISEEIGMELEKATLEDLGQAKRVVINKDTTTIIDGVGEEAAIQGRVAQIRQQIEEATSDYDREKLQERVAKLAGGVAVIKVGAATEVEMKEKKARVEDALHATRAAVEEGVVAGGGVALIRVASKIADLKGQNEDQNVGIKVALRAMEAPLRQIVLNCGEEPSVVANTVKGGDGNYGYNAATEEYGNMIDMGILDPTKVTRSALQYAASVAGLMITTECMVTDLPKSDAPDLGAAGGMGGMGGMGGMM.

Residues Thr-30–Pro-33, Lys-51, Asp-87–Thr-91, Gly-415, Asn-479–Ala-481, and Asp-495 each bind ATP.

It belongs to the chaperonin (HSP60) family. Forms a cylinder of 14 subunits composed of two heptameric rings stacked back-to-back. Interacts with the co-chaperonin GroES. UMPylated on a tyrosine residue by YdiU under ATP-limited conditions.

Its subcellular location is the cytoplasm. It catalyses the reaction ATP + H2O + a folded polypeptide = ADP + phosphate + an unfolded polypeptide.. Its activity is regulated as follows. UMPylation of the chaperone by YdiU negatively regulates its activity, facilitating Salmonella survival under ATP-limited conditions. In terms of biological role, together with its co-chaperonin GroES, plays an essential role in assisting protein folding. The GroEL-GroES system forms a nano-cage that allows encapsulation of the non-native substrate proteins and provides a physical environment optimized to promote and accelerate protein folding. The sequence is that of Chaperonin GroEL from Salmonella typhimurium (strain LT2 / SGSC1412 / ATCC 700720).